The chain runs to 271 residues: 3-methyl-2-oxobutanoate hydroxymethyltransferase (271 aa).

Positions 53 and 92 each coordinate Mg(2+). Residues 53–54 (DS), Asp92, and Lys120 each bind 3-methyl-2-oxobutanoate. Mg(2+) is bound at residue Glu122. Catalysis depends on Glu189, which acts as the Proton acceptor.

The protein belongs to the PanB family. Homodecamer; pentamer of dimers. The cofactor is Mg(2+).

It localises to the cytoplasm. It carries out the reaction 3-methyl-2-oxobutanoate + (6R)-5,10-methylene-5,6,7,8-tetrahydrofolate + H2O = 2-dehydropantoate + (6S)-5,6,7,8-tetrahydrofolate. The protein operates within cofactor biosynthesis; (R)-pantothenate biosynthesis; (R)-pantoate from 3-methyl-2-oxobutanoate: step 1/2. Catalyzes the reversible reaction in which hydroxymethyl group from 5,10-methylenetetrahydrofolate is transferred onto alpha-ketoisovalerate to form ketopantoate. This chain is 3-methyl-2-oxobutanoate hydroxymethyltransferase, found in Burkholderia thailandensis (strain ATCC 700388 / DSM 13276 / CCUG 48851 / CIP 106301 / E264).